The primary structure comprises 358 residues: Alanine racemase (358 aa).

K35 (proton acceptor; specific for D-alanine) is an active-site residue. The residue at position 35 (K35) is an N6-(pyridoxal phosphate)lysine. R131 contributes to the substrate binding site. Y253 serves as the catalytic Proton acceptor; specific for L-alanine. M301 lines the substrate pocket.

It belongs to the alanine racemase family. The cofactor is pyridoxal 5'-phosphate.

It carries out the reaction L-alanine = D-alanine. Its pathway is amino-acid biosynthesis; D-alanine biosynthesis; D-alanine from L-alanine: step 1/1. Functionally, catalyzes the interconversion of L-alanine and D-alanine. May also act on other amino acids. The polypeptide is Alanine racemase (alr) (Alteromonas mediterranea (strain DSM 17117 / CIP 110805 / LMG 28347 / Deep ecotype)).